The primary structure comprises 204 residues: Imidazoleglycerol-phosphate dehydratase (204 aa).

The protein belongs to the imidazoleglycerol-phosphate dehydratase family.

The protein resides in the cytoplasm. The enzyme catalyses D-erythro-1-(imidazol-4-yl)glycerol 3-phosphate = 3-(imidazol-4-yl)-2-oxopropyl phosphate + H2O. The protein operates within amino-acid biosynthesis; L-histidine biosynthesis; L-histidine from 5-phospho-alpha-D-ribose 1-diphosphate: step 6/9. The polypeptide is Imidazoleglycerol-phosphate dehydratase (Rhodococcus erythropolis (strain PR4 / NBRC 100887)).